Here is a 422-residue protein sequence, read N- to C-terminus: Tyrosine--tRNA ligase (422 aa).

Tyr35 serves as a coordination point for L-tyrosine. Positions 40 to 49 (PTAPSLHVGH) match the 'HIGH' region motif. L-tyrosine-binding residues include Tyr170 and Gln174. Positions 231 to 235 (KFGKT) match the 'KMSKS' region motif. Lys234 contributes to the ATP binding site. The S4 RNA-binding domain maps to 353-419 (APVVDLFAEV…GKKNLAAVEI (67 aa)).

This sequence belongs to the class-I aminoacyl-tRNA synthetase family. TyrS type 1 subfamily. In terms of assembly, homodimer.

The protein resides in the cytoplasm. The enzyme catalyses tRNA(Tyr) + L-tyrosine + ATP = L-tyrosyl-tRNA(Tyr) + AMP + diphosphate + H(+). In terms of biological role, catalyzes the attachment of tyrosine to tRNA(Tyr) in a two-step reaction: tyrosine is first activated by ATP to form Tyr-AMP and then transferred to the acceptor end of tRNA(Tyr). This chain is Tyrosine--tRNA ligase, found in Streptomyces coelicolor (strain ATCC BAA-471 / A3(2) / M145).